Reading from the N-terminus, the 372-residue chain is GDSL esterase/lipase At5g45910 (372 aa).

A signal peptide spans Met1 to Ser19. The Nucleophile role is filled by Ser37. Asn66, Asn101, and Asn137 each carry an N-linked (GlcNAc...) asparagine glycan. Catalysis depends on residues Asp345 and His348.

The protein belongs to the 'GDSL' lipolytic enzyme family.

Its subcellular location is the secreted. This Arabidopsis thaliana (Mouse-ear cress) protein is GDSL esterase/lipase At5g45910.